Here is a 266-residue protein sequence, read N- to C-terminus: Diphthine synthase (266 aa).

S-adenosyl-L-methionine contacts are provided by residues L9, D85, I88, 113-114, L168, A210, and H235; that span reads TA.

This sequence belongs to the diphthine synthase family. As to quaternary structure, homodimer.

It carries out the reaction 2-[(3S)-amino-3-carboxypropyl]-L-histidyl-[translation elongation factor 2] + 3 S-adenosyl-L-methionine = diphthine-[translation elongation factor 2] + 3 S-adenosyl-L-homocysteine + 3 H(+). It participates in protein modification; peptidyl-diphthamide biosynthesis. Its function is as follows. S-adenosyl-L-methionine-dependent methyltransferase that catalyzes the trimethylation of the amino group of the modified target histidine residue in translation elongation factor 2 (EF-2), to form an intermediate called diphthine. The three successive methylation reactions represent the second step of diphthamide biosynthesis. The polypeptide is Diphthine synthase (Natronomonas pharaonis (strain ATCC 35678 / DSM 2160 / CIP 103997 / JCM 8858 / NBRC 14720 / NCIMB 2260 / Gabara) (Halobacterium pharaonis)).